Reading from the N-terminus, the 618-residue chain is Sodium-coupled monocarboxylate transporter 2 (618 aa).

Over 1 to 9 the chain is Extracellular; the sequence is MEVKNFAVW. A helical membrane pass occupies residues 10–30; that stretch reads DYVVFAALFFISSGIGVFFAI. The Cytoplasmic segment spans residues 31 to 47; it reads KERKKATSREFLVGGRQ. Residues 48–68 traverse the membrane as a helical segment; sequence MSFGPVGLSLTASFMSAVTVL. The Extracellular segment spans residues 69-82; the sequence is GTPSEVYRFGASFL. Residues 83–103 form a helical membrane-spanning segment; it reads VFFIAYLFVILLTSELFLPVF. The Cytoplasmic portion of the chain corresponds to 104–128; the sequence is YRSGITSTYEYLQLRFNKPVRYAAT. A helical transmembrane segment spans residues 129 to 149; that stretch reads VIYIVQTILYTGVVVYAPALA. The Extracellular portion of the chain corresponds to 150–157; sequence LNQVTGFD. Residues 158–178 traverse the membrane as a helical segment; the sequence is LWGSVFATGIVCTFYCTLGGL. Over 179–180 the chain is Cytoplasmic; it reads KA. The chain crosses the membrane as a helical span at residues 181-201; it reads VVWTDAFQMVVMIVGFLTVLI. Over 202–235 the chain is Extracellular; sequence QGSTHAGGFHNVLEQSTNGSRLHIFDFDVDPLRR. A helical transmembrane segment spans residues 236 to 256; the sequence is HTFWTITVGGTFTWLGIYGVN. Over 257-275 the chain is Cytoplasmic; it reads QSTIQRCISCKTEKHAKLA. The helical transmembrane segment at 276 to 296 threads the bilayer; that stretch reads LYFNLLGLWIILVCAVFSGLI. At 297 to 321 the chain is on the extracellular side; it reads MYSHFKDCDPWTSGIISAPDQLMPY. The chain crosses the membrane as a helical span at residues 322–342; sequence FVMEIFATMPGLPGLFVACAF. Over 343–385 the chain is Cytoplasmic; it reads SGTLSTVASSINALATVTFEDFVKSCFPHLSDKLSTWISKGLC. Residues 386 to 406 traverse the membrane as a helical segment; it reads LLFGVMCTSMAVAASVMGGVV. The Extracellular segment spans residues 407-411; that stretch reads QASLS. The helical transmembrane segment at 412–432 threads the bilayer; that stretch reads IHGMCGGPMLGLFSLGIVFPF. Residues 433–437 lie on the Cytoplasmic side of the membrane; that stretch reads VNWKG. The helical transmembrane segment at 438–458 threads the bilayer; the sequence is ALGGLLTGITLSFWVAIGAFI. Residues 459 to 504 lie on the Extracellular side of the membrane; the sequence is YPAPASKTWPLPLSTDQCIKSNVTATGPPVLSSRPGIADTWYSISY. Asparagine 480 carries N-linked (GlcNAc...) asparagine glycosylation. The helical transmembrane segment at 505–525 threads the bilayer; the sequence is LYYSAVGCLGCIVAGVIISLI. Residues 526–618 are Cytoplasmic-facing; it reads TGRQRGEDIQ…NNMAFETTHF (93 aa).

This sequence belongs to the sodium:solute symporter (SSF) (TC 2.A.21) family.

It localises to the apical cell membrane. It carries out the reaction (S)-lactate(out) + Na(+)(out) = (S)-lactate(in) + Na(+)(in). The catalysed reaction is nicotinate(out) + Na(+)(out) = nicotinate(in) + Na(+)(in). It catalyses the reaction pyruvate(out) + Na(+)(out) = pyruvate(in) + Na(+)(in). The enzyme catalyses propanoate(out) + Na(+)(out) = propanoate(in) + Na(+)(in). It carries out the reaction butanoate(out) + Na(+)(out) = butanoate(in) + Na(+)(in). The catalysed reaction is acetoacetate(out) + Na(+)(out) = acetoacetate(in) + Na(+)(in). With respect to regulation, cotransport of monocarboxylates and nicotinate strongly inhibited by ibuprofen, fenoprofen and ketoprofen. Its function is as follows. Acts as an electroneutral and low-affinity sodium (Na(+))-dependent sodium-coupled solute transporter. Catalyzes the transport across the plasma membrane of many monocarboxylates such as lactate, pyruvate, nicotinate, propionate, butyrate and beta-D-hydroxybutyrate. May be responsible for the first step of reabsorption of monocarboxylates from the lumen of the proximal tubule of the kidney and the small intestine. May play also a role in monocarboxylates transport in the retina. The protein is Sodium-coupled monocarboxylate transporter 2 of Homo sapiens (Human).